The primary structure comprises 231 residues: Verlamelin biosynthesis protein B (231 aa).

The protein operates within secondary metabolite biosynthesis. In terms of biological role, part of the gene cluster that mediates the biosynthesis of verlamelin, a lipopeptide that exhibits antifungal activity against plant pathogenic fungi. Verlamelin is a cyclic hexadepsipeptide and is bridged by ester bonding between a 5-hydroxytetradecanoic acid moiety and a carboxyl group on the terminal Val of amide-bonded tetradecanoyl-hexapeptide D-allo-Thr-D-Ala-L-Pro-L-Gln-D-Tyr-L-Val. VlmA and vlmB are altogether regarded as essential components in the biosynthesis of 5-hydroxytetradecanoic acid. VlmA catalyzes the hydroxylation at position C5 of tetradecanoic acid produced in primary metabolism, while the precise function of vlmB still remains to be solved. To be loaded onto the waiting NRPS, 5-hydroxytetradecanoic acid is activated in the form of acyladenylate by the AMP-dependent ligase vlmC. VlmS seems to accept the fatty-acyl intermediate onto the initial module to further elongate amino acid residues by the downstream modules. In addition, in the last module at its C-terminus, vlmS contains a surplus condensation (C) domain that may be involved in cyclization, the last step to form verlamelin. In Lecanicillium sp, this protein is Verlamelin biosynthesis protein B.